We begin with the raw amino-acid sequence, 478 residues long: Cytochrome c-552 (478 aa).

An N-terminal signal peptide occupies residues 1–26; it reads MTRIKINARRIFSLLIPFFFFTSVHA. Heme c is bound at residue histidine 94. The heme site is built by cysteine 122, cysteine 125, and lysine 126. Positions 160, 163, 164, 209, 212, and 213 each coordinate heme c. Glutamate 215, tyrosine 216, lysine 261, and glutamine 263 together coordinate Ca(2+). Residue tyrosine 216 participates in substrate binding. Histidine 264 is a binding site for substrate. Residues histidine 275, cysteine 282, cysteine 285, histidine 286, histidine 301, cysteine 314, cysteine 317, histidine 318, and histidine 393 each coordinate heme c.

It belongs to the cytochrome c-552 family. The cofactor is Ca(2+). Heme c serves as cofactor.

It localises to the periplasm. It carries out the reaction 6 Fe(III)-[cytochrome c] + NH4(+) + 2 H2O = 6 Fe(II)-[cytochrome c] + nitrite + 8 H(+). The protein operates within nitrogen metabolism; nitrate reduction (assimilation). Catalyzes the reduction of nitrite to ammonia, consuming six electrons in the process. This chain is Cytochrome c-552, found in Escherichia coli (strain ATCC 8739 / DSM 1576 / NBRC 3972 / NCIMB 8545 / WDCM 00012 / Crooks).